The primary structure comprises 198 residues: Ribonuclease HII 1 (198 aa).

The RNase H type-2 domain occupies 7–196; that stretch reads ELTAGVDEAG…VRAALARAAA (190 aa). Residues D13, E14, and D105 each coordinate a divalent metal cation.

It belongs to the RNase HII family. It depends on Mn(2+) as a cofactor. The cofactor is Mg(2+).

The protein resides in the cytoplasm. It catalyses the reaction Endonucleolytic cleavage to 5'-phosphomonoester.. Its function is as follows. Endonuclease that specifically degrades the RNA of RNA-DNA hybrids. In Methylibium petroleiphilum (strain ATCC BAA-1232 / LMG 22953 / PM1), this protein is Ribonuclease HII 1.